The primary structure comprises 139 residues: Large-conductance mechanosensitive channel (139 aa).

Transmembrane regions (helical) follow at residues 17-37 and 88-108; these read VVDM…VTSL and TVDF…IMAA.

The protein belongs to the MscL family. As to quaternary structure, homopentamer.

It is found in the cell inner membrane. Channel that opens in response to stretch forces in the membrane lipid bilayer. May participate in the regulation of osmotic pressure changes within the cell. The sequence is that of Large-conductance mechanosensitive channel from Porphyromonas gingivalis (strain ATCC 33277 / DSM 20709 / CIP 103683 / JCM 12257 / NCTC 11834 / 2561).